The following is a 247-amino-acid chain: Ribose-5-phosphate isomerase (247 aa).

It belongs to the ribose 5-phosphate isomerase family.

It localises to the cytoplasm. The enzyme catalyses aldehydo-D-ribose 5-phosphate = D-ribulose 5-phosphate. It functions in the pathway carbohydrate degradation; pentose phosphate pathway; D-ribose 5-phosphate from D-ribulose 5-phosphate (non-oxidative stage): step 1/1. The sequence is that of Ribose-5-phosphate isomerase (RKI1) from Meyerozyma guilliermondii (strain ATCC 6260 / CBS 566 / DSM 6381 / JCM 1539 / NBRC 10279 / NRRL Y-324) (Yeast).